The primary structure comprises 344 residues: Late embryogenesis abundant protein 17 (344 aa).

Disordered stretches follow at residues 1 to 20 (MASR…RRAA) and 116 to 258 (KDYT…QGQG). Residues 3–52 (SRQDRREARAEADARRAAEEIARARDERVMQAEVDARSAADEIARARADR) adopt a coiled-coil conformation. Basic and acidic residues-rich tracts occupy residues 116-163 (KDYT…KDAV), 172-230 (EATK…DATK), and 238-252 (DKAR…DATD).

It belongs to the LEA type 4 family. Expressed in embryos.

The protein resides in the nucleus. Involved in abiotic stress responses. May function as chaperone and contribute to prevent the formation of damaging protein aggregates. The polypeptide is Late embryogenesis abundant protein 17 (Oryza sativa subsp. japonica (Rice)).